We begin with the raw amino-acid sequence, 616 residues long: Tumor necrosis factor receptor superfamily member 11A (616 aa).

A signal peptide spans 1–29; sequence MAPRARRRRPLFALLLLCALLARLQVALQ. Over 30–212 the chain is Extracellular; the sequence is IAPPCTSEKH…PPNEPHVYLP (183 aa). Intrachain disulfides connect Cys-34/Cys-46, Cys-47/Cys-60, Cys-50/Cys-68, Cys-71/Cys-86, Cys-92/Cys-112, Cys-114/Cys-127, Cys-124/Cys-126, Cys-133/Cys-151, and Cys-154/Cys-169. TNFR-Cys repeat units lie at residues 34–68, 71–112, 114–151, and 154–194; these read CTSE…DSVC, CGPD…PRRC, CTAG…DTVC, and CLAG…DAVC. Residue Asn-105 is glycosylated (N-linked (GlcNAc...) asparagine). Residues Cys-133, Ala-134, and Ser-160 each coordinate Na(+). Asn-174 carries an N-linked (GlcNAc...) asparagine glycan. An intrachain disulfide couples Cys-175 to Cys-194. Residues 213 to 233 form a helical membrane-spanning segment; the sequence is GLIILLLFASVALVAAIIFGV. Over 234 to 616 the chain is Cytoplasmic; that stretch reads CYRKKGKALT…PVQEQGGAKA (383 aa). A disordered region spans residues 468 to 536; the sequence is PLPQCAYGMG…GNSNSTFISS (69 aa). Positions 483-493 are enriched in basic and acidic residues; the sequence is EASRTEARDQP. The segment covering 499-508 has biased composition (low complexity); that stretch reads GRLPSSARAG. The span at 524–536 shows a compositional bias: polar residues; it reads NVTGNSNSTFISS. The interval 544 to 549 is required for interaction with EEIG1 and osteoclast differentiation; it reads GDIIVV. The disordered stretch occupies residues 556 to 616; sequence QEGAAAAAEP…PVQEQGGAKA (61 aa). The span at 570-580 shows a compositional bias: basic and acidic residues; the sequence is VQEETLARRDS. Ser-580 carries the post-translational modification Phosphoserine.

As to quaternary structure, binds to the clefts between the subunits of the TNFSF11 ligand trimer to form a heterohexamer. Part of a complex composed of EEIG1, TNFRSF11A/RANK, PLCG2, GAB2, TEC and BTK; complex formation increases in the presence of TNFSF11/RANKL. Interacts with TRAF1, TRAF2, TRAF3, TRAF5 and TRAF6. Interacts (via cytoplasmic domain) with GAB2. Interacts (via cytoplasmic domain); with EEIG1 (via N-terminus); when in the presence of TNFSF11/RANKL. Ubiquitous expression with high levels in skeletal muscle, thymus, liver, colon, small intestine and adrenal gland.

The protein localises to the cell membrane. Its subcellular location is the membrane raft. In terms of biological role, receptor for TNFSF11/RANKL/TRANCE/OPGL; essential for RANKL-mediated osteoclastogenesis. Its interaction with EEIG1 promotes osteoclastogenesis via facilitating the transcription of NFATC1 and activation of PLCG2. Involved in the regulation of interactions between T-cells and dendritic cells. This is Tumor necrosis factor receptor superfamily member 11A (TNFRSF11A) from Homo sapiens (Human).